Reading from the N-terminus, the 40-residue chain is Photosystem II reaction center protein J (40 aa).

A helical transmembrane segment spans residues 8–28 (IPLWLIGTVVGTPVISLVGIF).

Belongs to the PsbJ family. In terms of assembly, PSII is composed of 1 copy each of membrane proteins PsbA, PsbB, PsbC, PsbD, PsbE, PsbF, PsbH, PsbI, PsbJ, PsbK, PsbL, PsbM, PsbT, PsbX, PsbY, PsbZ, Psb30/Ycf12, at least 3 peripheral proteins of the oxygen-evolving complex and a large number of cofactors. It forms dimeric complexes.

The protein localises to the plastid. The protein resides in the chloroplast thylakoid membrane. Its function is as follows. One of the components of the core complex of photosystem II (PSII). PSII is a light-driven water:plastoquinone oxidoreductase that uses light energy to abstract electrons from H(2)O, generating O(2) and a proton gradient subsequently used for ATP formation. It consists of a core antenna complex that captures photons, and an electron transfer chain that converts photonic excitation into a charge separation. This Huperzia lucidula (Shining clubmoss) protein is Photosystem II reaction center protein J.